Consider the following 189-residue polypeptide: dCTP deaminase (189 aa).

Residues 112–117 (KSTYAR), 136–138 (TLE), Gln157, Tyr171, and Gln181 contribute to the dCTP site. Glu138 functions as the Proton donor/acceptor in the catalytic mechanism.

This sequence belongs to the dCTP deaminase family. Homotrimer.

It carries out the reaction dCTP + H2O + H(+) = dUTP + NH4(+). It participates in pyrimidine metabolism; dUMP biosynthesis; dUMP from dCTP (dUTP route): step 1/2. Functionally, catalyzes the deamination of dCTP to dUTP. This chain is dCTP deaminase, found in Nitrosospira multiformis (strain ATCC 25196 / NCIMB 11849 / C 71).